Reading from the N-terminus, the 605-residue chain is Elongation factor 4 (605 aa).

Residues 11 to 193 (EKIRNFSIIA…QIVEKVPAPT (183 aa)) enclose the tr-type G domain. Residues 23 to 28 (DHGKST) and 140 to 143 (NKID) each bind GTP.

The protein belongs to the TRAFAC class translation factor GTPase superfamily. Classic translation factor GTPase family. LepA subfamily.

It localises to the cell membrane. It carries out the reaction GTP + H2O = GDP + phosphate + H(+). Functionally, required for accurate and efficient protein synthesis under certain stress conditions. May act as a fidelity factor of the translation reaction, by catalyzing a one-codon backward translocation of tRNAs on improperly translocated ribosomes. Back-translocation proceeds from a post-translocation (POST) complex to a pre-translocation (PRE) complex, thus giving elongation factor G a second chance to translocate the tRNAs correctly. Binds to ribosomes in a GTP-dependent manner. In Streptococcus pyogenes serotype M4 (strain MGAS10750), this protein is Elongation factor 4.